The following is a 276-amino-acid chain: Rhomboid protease GlpG (276 aa).

A run of 6 helical transmembrane segments spans residues 96–116 (VTWLIMIACILVFVVMSIVGA), 142–162 (AFMHFSLMHILFNLLWWWYIG), 169–189 (LGSGKLIVITVISALLSGYVQ), 192–212 (FSGPWFGGLSGVVYALMGYAW), 229–249 (LIAFALIWIVAGWFDVFGMSM), and 250–270 (ANGAHIAGLAVGLAMAFADTV). The active-site Nucleophile is the serine 201. Residue histidine 254 is part of the active site.

Belongs to the peptidase S54 family.

The protein localises to the cell inner membrane. The enzyme catalyses Cleaves type-1 transmembrane domains using a catalytic dyad composed of serine and histidine that are contributed by different transmembrane domains.. Functionally, rhomboid-type serine protease that catalyzes intramembrane proteolysis. This is Rhomboid protease GlpG from Citrobacter koseri (strain ATCC BAA-895 / CDC 4225-83 / SGSC4696).